The following is a 922-amino-acid chain: 1,4-alpha-glucan-branching enzyme 1, chloroplastic/amyloplastic (922 aa).

The N-terminal 47 residues, 1-47 (MVYTISGIRFPVLPSLHKSTLRCDRRASSHSFFLKNNSSSFSRTSLY), are a transit peptide targeting the chloroplast. The interval 83-130 (LENPDITSEDAQNLEDLTMKDGNKYNIDESTSSYREVGDEKGSVTSSS) is disordered. The span at 99–109 (LTMKDGNKYNI) shows a compositional bias: basic and acidic residues. The Nucleophile role is filled by Asp494. The active-site Proton donor is Glu549. Residues 870-922 (VESEPIELSVEEAESEPIERSVEEVESETTQQSVEVESETTQQSVEVESETTQ) are disordered. A compositionally biased stretch (low complexity) spans 897–922 (ETTQQSVEVESETTQQSVEVESETTQ).

Belongs to the glycosyl hydrolase 13 family. GlgB subfamily. In terms of assembly, monomer. As to expression, expressed in roots, leaves, stipules, pods and flowers.

It localises to the plastid. Its subcellular location is the chloroplast. The protein localises to the amyloplast. It catalyses the reaction Transfers a segment of a (1-&gt;4)-alpha-D-glucan chain to a primary hydroxy group in a similar glucan chain.. Its pathway is glycan biosynthesis; starch biosynthesis. Catalyzes the formation of the alpha-1,6-glucosidic linkages in starch by scission of a 1,4-alpha-linked oligosaccharide from growing alpha-1,4-glucan chains and the subsequent attachment of the oligosaccharide to the alpha-1,6 position. May preferentially transfer short chains during branching. Responsible for the synthesis of about 75% of the amylopectin found in the starch granules of mature embryos. In Pisum sativum (Garden pea), this protein is 1,4-alpha-glucan-branching enzyme 1, chloroplastic/amyloplastic (SBEI).